The following is a 510-amino-acid chain: Cytochrome P450 monooxygenase btcC (510 aa).

A helical membrane pass occupies residues 1 to 21 (MSFPGVIFVVSFFPLLMGIAV). Heme is bound at residue Cys-446.

Belongs to the cytochrome P450 family. It depends on heme as a cofactor.

The protein resides in the membrane. It participates in secondary metabolite biosynthesis; terpenoid biosynthesis. Cytochrome P450 monooxygenase; part of the gene cluster that mediates the biosynthesis of betaestacins. The bifunctional terpene synthase btcA converts isopentenyl diphosphate (IPP) and dimethylallyl diphosphate (DMAPP) into the sesterterpene betaestacin I. The C-terminal prenyltransferase (PT) domain of btcA catalyzes formation of GFPP, whereas the N-terminal terpene cyclase (TC) domain catalyzes the cyclization of GFPP into betaestacin I. The cytochrome P450 monooxygenase btcB is then responsible for the six-step oxidation of betaestacin I to yield betaestacin II. The roles of the cytochrome P450 monooxygenase btcC and the alpha-ketoglutarate-dependent dioxygenase btcD have not been identified yet. This Neocamarosporium betae (Beet black rot fungus) protein is Cytochrome P450 monooxygenase btcC.